The primary structure comprises 284 residues: 4-diphosphocytidyl-2-C-methyl-D-erythritol kinase (284 aa).

The active site involves Lys-14. Position 98–108 (98–108) interacts with ATP; sequence PMGGGIGGGSS. The active site involves Asp-140.

The protein belongs to the GHMP kinase family. IspE subfamily.

The enzyme catalyses 4-CDP-2-C-methyl-D-erythritol + ATP = 4-CDP-2-C-methyl-D-erythritol 2-phosphate + ADP + H(+). The protein operates within isoprenoid biosynthesis; isopentenyl diphosphate biosynthesis via DXP pathway; isopentenyl diphosphate from 1-deoxy-D-xylulose 5-phosphate: step 3/6. Its function is as follows. Catalyzes the phosphorylation of the position 2 hydroxy group of 4-diphosphocytidyl-2C-methyl-D-erythritol. This Shewanella loihica (strain ATCC BAA-1088 / PV-4) protein is 4-diphosphocytidyl-2-C-methyl-D-erythritol kinase.